The primary structure comprises 462 residues: ATP synthase subunit beta (462 aa).

151-158 (GGAGVGKT) contacts ATP.

This sequence belongs to the ATPase alpha/beta chains family. As to quaternary structure, F-type ATPases have 2 components, CF(1) - the catalytic core - and CF(0) - the membrane proton channel. CF(1) has five subunits: alpha(3), beta(3), gamma(1), delta(1), epsilon(1). CF(0) has four main subunits: a(1), b(1), b'(1) and c(9-12).

It is found in the cell inner membrane. It carries out the reaction ATP + H2O + 4 H(+)(in) = ADP + phosphate + 5 H(+)(out). Produces ATP from ADP in the presence of a proton gradient across the membrane. The catalytic sites are hosted primarily by the beta subunits. This chain is ATP synthase subunit beta, found in Chlorobium phaeovibrioides (strain DSM 265 / 1930) (Prosthecochloris vibrioformis (strain DSM 265)).